The primary structure comprises 101 residues: Large ribosomal subunit protein eL43 (101 aa).

Zn(2+)-binding residues include Cys40, Cys43, Cys59, and Cys62. Residues 40–62 (CPSCRSLVRLERIAFGIWRCPKC) form a C4-type zinc finger.

This sequence belongs to the eukaryotic ribosomal protein eL43 family. Putative zinc-binding subfamily. In terms of assembly, part of the 50S ribosomal subunit. It depends on Zn(2+) as a cofactor.

In terms of biological role, binds to the 23S rRNA. The chain is Large ribosomal subunit protein eL43 from Pyrobaculum aerophilum (strain ATCC 51768 / DSM 7523 / JCM 9630 / CIP 104966 / NBRC 100827 / IM2).